An 84-amino-acid polypeptide reads, in one-letter code: Tetrahydromethanopterin S-methyltransferase subunit G (84 aa).

The helical transmembrane segment at 50 to 70 (IGILYGLVIGIILSYILPALI) threads the bilayer.

The protein belongs to the MtrG family. As to quaternary structure, the complex is composed of 8 subunits; MtrA, MtrB, MtrC, MtrD, MtrE, MtrF, MtrG and MtrH.

Its subcellular location is the cell membrane. It carries out the reaction 5-methyl-5,6,7,8-tetrahydromethanopterin + coenzyme M + 2 Na(+)(in) = 5,6,7,8-tetrahydromethanopterin + methyl-coenzyme M + 2 Na(+)(out). The protein operates within one-carbon metabolism; methanogenesis from CO(2); methyl-coenzyme M from 5,10-methylene-5,6,7,8-tetrahydromethanopterin: step 2/2. Its function is as follows. Part of a complex that catalyzes the formation of methyl-coenzyme M and tetrahydromethanopterin from coenzyme M and methyl-tetrahydromethanopterin. This is an energy-conserving, sodium-ion translocating step. The sequence is that of Tetrahydromethanopterin S-methyltransferase subunit G from Methanocaldococcus jannaschii (strain ATCC 43067 / DSM 2661 / JAL-1 / JCM 10045 / NBRC 100440) (Methanococcus jannaschii).